The sequence spans 71 residues: Small ribosomal subunit protein bS21B (71 aa).

This sequence belongs to the bacterial ribosomal protein bS21 family.

This is Small ribosomal subunit protein bS21B from Rhizobium johnstonii (strain DSM 114642 / LMG 32736 / 3841) (Rhizobium leguminosarum bv. viciae).